A 1012-amino-acid chain; its full sequence is Isoleucine--tRNA ligase, mitochondrial (1012 aa).

Residues 1–48 (MHWGLCPRGPGAAAVAAAGSFWGPARLPSRLGCLGMTRRLVVRSVAGA) constitute a mitochondrion transit peptide. The residue at position 56 (K56) is an N6-succinyllysine. Position 74 is an N6-acetyllysine; alternate (K74). Position 74 is an N6-succinyllysine; alternate (K74). The 'HIGH' region motif lies at 116-126 (PYANGDPHVGH). Position 194 is an N6-succinyllysine (K194). Residue K233 is modified to N6-acetyllysine. The residue at position 241 (K241) is an N6-acetyllysine; alternate. The residue at position 241 (K241) is an N6-succinyllysine; alternate. K479 and K500 each carry N6-succinyllysine. K664 and K667 together coordinate ATP. Residues 664–668 (KMSKS) carry the 'KMSKS' region motif. K725 carries the post-translational modification N6-acetyllysine. N6-acetyllysine; alternate occurs at positions 775 and 781. N6-succinyllysine; alternate is present on residues K775 and K781.

This sequence belongs to the class-I aminoacyl-tRNA synthetase family.

It is found in the mitochondrion matrix. The enzyme catalyses tRNA(Ile) + L-isoleucine + ATP = L-isoleucyl-tRNA(Ile) + AMP + diphosphate. Functionally, aminoacyl-tRNA synthetase that catalyzes the specific attachment of isoleucine to its cognate tRNA (tRNA(Ile)). The chain is Isoleucine--tRNA ligase, mitochondrial from Mus musculus (Mouse).